Reading from the N-terminus, the 222-residue chain is Ribosomal RNA small subunit methyltransferase I (222 aa).

This sequence belongs to the methyltransferase superfamily. RsmI family.

It is found in the cytoplasm. It carries out the reaction cytidine(1402) in 16S rRNA + S-adenosyl-L-methionine = 2'-O-methylcytidine(1402) in 16S rRNA + S-adenosyl-L-homocysteine + H(+). Catalyzes the 2'-O-methylation of the ribose of cytidine 1402 (C1402) in 16S rRNA. The protein is Ribosomal RNA small subunit methyltransferase I of Thermotoga maritima (strain ATCC 43589 / DSM 3109 / JCM 10099 / NBRC 100826 / MSB8).